Reading from the N-terminus, the 218-residue chain is Pyridoxine/pyridoxamine 5'-phosphate oxidase (218 aa).

Residues 66 to 71, Arg-87, Lys-88, and Gln-110 each bind FMN; that span reads RVVLLK. Lys-71 lines the substrate pocket. Substrate contacts are provided by Tyr-128, Arg-132, and Ser-136. FMN is bound by residues 145-146 and Trp-190; that span reads QS. Position 196–198 (196–198) interacts with substrate; that stretch reads RLH. Arg-200 contributes to the FMN binding site.

This sequence belongs to the pyridoxamine 5'-phosphate oxidase family. As to quaternary structure, homodimer. FMN serves as cofactor.

The enzyme catalyses pyridoxamine 5'-phosphate + O2 + H2O = pyridoxal 5'-phosphate + H2O2 + NH4(+). It catalyses the reaction pyridoxine 5'-phosphate + O2 = pyridoxal 5'-phosphate + H2O2. It functions in the pathway cofactor metabolism; pyridoxal 5'-phosphate salvage; pyridoxal 5'-phosphate from pyridoxamine 5'-phosphate: step 1/1. It participates in cofactor metabolism; pyridoxal 5'-phosphate salvage; pyridoxal 5'-phosphate from pyridoxine 5'-phosphate: step 1/1. Functionally, catalyzes the oxidation of either pyridoxine 5'-phosphate (PNP) or pyridoxamine 5'-phosphate (PMP) into pyridoxal 5'-phosphate (PLP). In Anaplasma marginale (strain St. Maries), this protein is Pyridoxine/pyridoxamine 5'-phosphate oxidase.